Here is a 631-residue protein sequence, read N- to C-terminus: tRNA uridine 5-carboxymethylaminomethyl modification enzyme MnmG (631 aa).

Residues 13-18 (GGGHAG), Val-125, and Ser-180 contribute to the FAD site. Residue 273–287 (GPRYCPSIEDKVMRF) coordinates NAD(+). Gln-370 serves as a coordination point for FAD.

It belongs to the MnmG family. As to quaternary structure, homodimer. Heterotetramer of two MnmE and two MnmG subunits. The cofactor is FAD.

The protein localises to the cytoplasm. NAD-binding protein involved in the addition of a carboxymethylaminomethyl (cmnm) group at the wobble position (U34) of certain tRNAs, forming tRNA-cmnm(5)s(2)U34. The chain is tRNA uridine 5-carboxymethylaminomethyl modification enzyme MnmG from Vibrio cholerae serotype O1 (strain ATCC 39541 / Classical Ogawa 395 / O395).